Consider the following 416-residue polypeptide: Multifunctional CCA protein (416 aa).

Residues Gly-8 and Arg-11 each contribute to the ATP site. CTP contacts are provided by Gly-8 and Arg-11. The Mg(2+) site is built by Asp-21 and Asp-23. Residues Arg-91, Arg-138, and Arg-141 each coordinate ATP. CTP is bound by residues Arg-91, Arg-138, and Arg-141. An HD domain is found at 229–331 (TGLHQELVSD…YELLQRCDAF (103 aa)).

It belongs to the tRNA nucleotidyltransferase/poly(A) polymerase family. Bacterial CCA-adding enzyme type 1 subfamily. As to quaternary structure, monomer. Can also form homodimers and oligomers. It depends on Mg(2+) as a cofactor. Requires Ni(2+) as cofactor.

The catalysed reaction is a tRNA precursor + 2 CTP + ATP = a tRNA with a 3' CCA end + 3 diphosphate. It catalyses the reaction a tRNA with a 3' CCA end + 2 CTP + ATP = a tRNA with a 3' CCACCA end + 3 diphosphate. In terms of biological role, catalyzes the addition and repair of the essential 3'-terminal CCA sequence in tRNAs without using a nucleic acid template. Adds these three nucleotides in the order of C, C, and A to the tRNA nucleotide-73, using CTP and ATP as substrates and producing inorganic pyrophosphate. tRNA 3'-terminal CCA addition is required both for tRNA processing and repair. Also involved in tRNA surveillance by mediating tandem CCA addition to generate a CCACCA at the 3' terminus of unstable tRNAs. While stable tRNAs receive only 3'-terminal CCA, unstable tRNAs are marked with CCACCA and rapidly degraded. The chain is Multifunctional CCA protein from Xylella fastidiosa (strain M12).